Reading from the N-terminus, the 94-residue chain is Large ribosomal subunit protein uL23 (94 aa).

It belongs to the universal ribosomal protein uL23 family. As to quaternary structure, part of the 50S ribosomal subunit. Contacts protein L29, and trigger factor when it is bound to the ribosome.

Functionally, one of the early assembly proteins it binds 23S rRNA. One of the proteins that surrounds the polypeptide exit tunnel on the outside of the ribosome. Forms the main docking site for trigger factor binding to the ribosome. This chain is Large ribosomal subunit protein uL23, found in Treponema pallidum (strain Nichols).